The primary structure comprises 365 residues: Delta(7)-sterol 5(6)-desaturase ERG3 (365 aa).

The Cytoplasmic portion of the chain corresponds to 1–92; it reads MDLVLEVADH…LLPRSSILRE (92 aa). A helical membrane pass occupies residues 93–113; sequence FLSLWVIVTIFGLLLYLFTAS. Over 114–140 the chain is Lumenal; that stretch reads LSYVFVFDKSIFNHPRYLKNQMAMEIK. The helical transmembrane segment at 141-161 threads the bilayer; the sequence is LAVSAIPWMSMLTVPWFVMEL. At 162–242 the chain is on the cytoplasmic side; it reads NGHSKLYMKI…VDGFLQSISY (81 aa). One can recognise a Fatty acid hydroxylase domain in the interval 187–311; that stretch reads TFIFFTDCGV…FTTLWDRLGG (125 aa). The Histidine box-1 motif lies at 200–204; sequence HRWLH. The Histidine box-2 motif lies at 213–217; it reads HKPHH. Residues 243-263 traverse the membrane as a helical segment; the sequence is HIYPLILPLHKVSYLILFTFV. Topologically, residues 264–365 are lumenal; the sequence is NFWTVMIHDG…ENDPNTKKNN (102 aa). Residues 288-292 carry the Histidine box-3 motif; the sequence is HTVHH. Glycyl lysine isopeptide (Lys-Gly) (interchain with G-Cter in ubiquitin) cross-links involve residues Lys-324 and Lys-344.

Belongs to the sterol desaturase family. In terms of assembly, interacts with ERG28. Requires Fe cation as cofactor.

Its subcellular location is the endoplasmic reticulum membrane. It catalyses the reaction episterol + 2 Fe(II)-[cytochrome b5] + O2 + 2 H(+) = 5-dehydroepisterol + 2 Fe(III)-[cytochrome b5] + 2 H2O. It participates in steroid metabolism; ergosterol biosynthesis; ergosterol from zymosterol: step 3/5. C-5 sterol desaturase; part of the third module of ergosterol biosynthesis pathway that includes the late steps of the pathway. ERG3 catalyzes the introduction of a C-5 double bond in the B ring to produce 5-dehydroepisterol. The third module or late pathway involves the ergosterol synthesis itself through consecutive reactions that mainly occur in the endoplasmic reticulum (ER) membrane. Firstly, the squalene synthase ERG9 catalyzes the condensation of 2 farnesyl pyrophosphate moieties to form squalene, which is the precursor of all steroids. Squalene synthase is crucial for balancing the incorporation of farnesyl diphosphate (FPP) into sterol and nonsterol isoprene synthesis. Secondly, the squalene epoxidase ERG1 catalyzes the stereospecific oxidation of squalene to (S)-2,3-epoxysqualene, which is considered to be a rate-limiting enzyme in steroid biosynthesis. Then, the lanosterol synthase ERG7 catalyzes the cyclization of (S)-2,3 oxidosqualene to lanosterol, a reaction that forms the sterol core. In the next steps, lanosterol is transformed to zymosterol through a complex process involving various demethylation, reduction and desaturation reactions. The lanosterol 14-alpha-demethylase ERG11 (also known as CYP51) catalyzes C14-demethylation of lanosterol to produce 4,4'-dimethyl cholesta-8,14,24-triene-3-beta-ol, which is critical for ergosterol biosynthesis. The C-14 reductase ERG24 reduces the C14=C15 double bond of 4,4-dimethyl-cholesta-8,14,24-trienol to produce 4,4-dimethyl-cholesta-8,24-dienol. 4,4-dimethyl-cholesta-8,24-dienol is substrate of the C-4 demethylation complex ERG25-ERG26-ERG27 in which ERG25 catalyzes the three-step monooxygenation required for the demethylation of 4,4-dimethyl and 4alpha-methylsterols, ERG26 catalyzes the oxidative decarboxylation that results in a reduction of the 3-beta-hydroxy group at the C-3 carbon to an oxo group, and ERG27 is responsible for the reduction of the keto group on the C-3. ERG28 has a role as a scaffold to help anchor ERG25, ERG26 and ERG27 to the endoplasmic reticulum and ERG29 regulates the activity of the iron-containing C4-methylsterol oxidase ERG25. Then, the sterol 24-C-methyltransferase ERG6 catalyzes the methyl transfer from S-adenosyl-methionine to the C-24 of zymosterol to form fecosterol. The C-8 sterol isomerase ERG2 catalyzes the reaction which results in unsaturation at C-7 in the B ring of sterols and thus converts fecosterol to episterol. The sterol-C5-desaturase ERG3 then catalyzes the introduction of a C-5 double bond in the B ring to produce 5-dehydroepisterol. The C-22 sterol desaturase ERG5 further converts 5-dehydroepisterol into ergosta-5,7,22,24(28)-tetraen-3beta-ol by forming the C-22(23) double bond in the sterol side chain. Finally, ergosta-5,7,22,24(28)-tetraen-3beta-ol is substrate of the C-24(28) sterol reductase ERG4 to produce ergosterol. The protein is Delta(7)-sterol 5(6)-desaturase ERG3 of Saccharomyces cerevisiae (strain ATCC 204508 / S288c) (Baker's yeast).